Reading from the N-terminus, the 832-residue chain is MQKIYNHQNVEDGIESKWREKKYFIDHNLDKKPFSILLPPPNVTGKLHLGHALDSYIPDTIIRFKKLSGYDVLWLPGMDHAGIATQSKVESELYKQNKLTRHDLGKEKFLAEVWKWKEIHEKLFRQQWQTLGLALDYSNEAFTLSKEVNEKVIKIFVELYNRGYIYKKNRAVSWDINLQTAISNIEVINKETPQKMYYIKYFFENSSEYLTIATTRVETMLSDVAVIANPKDKRYKNLKIKFLIHPITKKRLPLIFDEYVKIKFGSGLMKLSAHAEADIEIIEKLGLEVIETIDKNGYINAPDYQWHKMERFEAREKMAQFLEENNYLIKAEDSISNVSYSDRSNSVIETLMLPQWFIKMDHFRDLILKNLSSKEKIKFLPNRYKNNLKRWMNNVYDWNISRQLWWGHQIPAWYKDGKMKVQAESPGQGWVQDSDVLDTWFSSGIAAFSFFKWENDDAFFKRYYPSSLMVSGYDLIFFWISRMIFLSLEFTNQRPFKEVFMHGLIRDKDGRKMSKSLNNGIDPIEVVEKYGSDALRWFLITNTAPGMDIRYNQEKIESAWKISNKLYNVALYISSMPDNNLEAKSSKLSEQSKWILNKLSALNKQIQKVFKTYDFSIIGVEIYQFIFTDLSSWYIELIKSLNIKNEAMYVFKKILIMLHPFLPFTSDYLFNKLYNEELLEQSWPKFKRFKDSSEINLLIDAITKIRKYRDDNNISKKEKLYLCLKEKISKKNLNILLSLTNSEYKENKDFLIVLDNNSIFIEISQEQKQKQKQELEKKIAFCQSEITRAQNILSNQSFIAKAPKEKIKLEEDKLQRYKQELQIYLEELKWKY.

The 'HIGH' region motif lies at 41 to 51 (PNVTGKLHLGH). The 'KMSKS' region signature appears at 512–516 (KMSKS). ATP is bound at residue Lys515. Residues 760–831 (FIEISQEQKQ…QIYLEELKWK (72 aa)) are a coiled coil.

The protein belongs to the class-I aminoacyl-tRNA synthetase family. ValS type 1 subfamily. As to quaternary structure, monomer.

Its subcellular location is the cytoplasm. It carries out the reaction tRNA(Val) + L-valine + ATP = L-valyl-tRNA(Val) + AMP + diphosphate. Catalyzes the attachment of valine to tRNA(Val). As ValRS can inadvertently accommodate and process structurally similar amino acids such as threonine, to avoid such errors, it has a 'posttransfer' editing activity that hydrolyzes mischarged Thr-tRNA(Val) in a tRNA-dependent manner. The chain is Valine--tRNA ligase from Mycoplasmopsis synoviae (strain 53) (Mycoplasma synoviae).